The sequence spans 181 residues: Protein Syd (181 aa).

Belongs to the Syd family.

Its subcellular location is the cell inner membrane. Interacts with the SecY protein in vivo. May bind preferentially to an uncomplexed state of SecY, thus functioning either as a chelating agent for excess SecY in the cell or as a regulatory factor that negatively controls the translocase function. This is Protein Syd from Enterobacter sp. (strain 638).